The chain runs to 213 residues: Ras-related protein Rab-4A (213 aa).

Residues glycine 18, threonine 19, glycine 20, lysine 21, serine 22, cysteine 23, serine 37, histidine 39, and threonine 40 each contribute to the GTP site. Serine 22 provides a ligand contact to Mg(2+). A Switch 1 motif is present at residues 39–44 (HTIGVE). Mg(2+) is bound by residues threonine 40 and aspartate 63. Positions 65-74 (AGQERFRSVT) match the Switch 2 motif. GTP-binding residues include glycine 66, asparagine 121, lysine 122, aspartate 124, alanine 152, and leucine 153. S-geranylgeranyl cysteine attachment occurs at residues cysteine 211 and cysteine 213. Cysteine 213 is modified (cysteine methyl ester).

This sequence belongs to the small GTPase superfamily. Rab family. The cofactor is Mg(2+).

It localises to the membrane. It is found in the cytoplasm. The protein resides in the early endosome membrane. Its subcellular location is the recycling endosome membrane. The enzyme catalyses GTP + H2O = GDP + phosphate + H(+). With respect to regulation, regulated by guanine nucleotide exchange factors (GEFs) which promote the exchange of bound GDP for free GTP. Regulated by GTPase activating proteins (GAPs) which increase the GTP hydrolysis activity. Inhibited by GDP dissociation inhibitors (GDIs). The small GTPases Rab are key regulators of intracellular membrane trafficking, from the formation of transport vesicles to their fusion with membranes. Rabs cycle between an inactive GDP-bound form and an active GTP-bound form that is able to recruit to membranes different sets of downstream effectors directly responsible for vesicle formation, movement, tethering and fusion. RAB4A is involved in protein transport. Also plays a role in vesicular traffic. Mediates VEGFR2 endosomal trafficking to enhance VEGFR2 signaling. Acts as a regulator of platelet alpha-granule release during activation and aggregation of platelets. The chain is Ras-related protein Rab-4A (rab4a) from Danio rerio (Zebrafish).